A 321-amino-acid polypeptide reads, in one-letter code: ATP-dependent 6-phosphofructokinase (321 aa).

Glycine 10 contacts ATP. 20–24 serves as a coordination point for ADP; it reads RAVVR. ATP is bound by residues 71–72 and 101–104; these read RD and GEGT. Mg(2+) is bound at residue glutamate 102. A substrate-binding site is contributed by 125 to 127; that stretch reads TID. Residue aspartate 127 is the Proton acceptor of the active site. Arginine 154 lines the ADP pocket. Substrate-binding positions include arginine 162 and 169–171; that span reads MGR. ADP is bound by residues 185-187 and 213-215; these read GAE and KLH. Substrate-binding positions include glutamate 222, arginine 246, and 252–255; that span reads HIQR.

It belongs to the phosphofructokinase type A (PFKA) family. ATP-dependent PFK group I subfamily. Prokaryotic clade 'B1' sub-subfamily. In terms of assembly, homotetramer. It depends on Mg(2+) as a cofactor.

It localises to the cytoplasm. The catalysed reaction is beta-D-fructose 6-phosphate + ATP = beta-D-fructose 1,6-bisphosphate + ADP + H(+). It participates in carbohydrate degradation; glycolysis; D-glyceraldehyde 3-phosphate and glycerone phosphate from D-glucose: step 3/4. Allosterically activated by ADP and other diphosphonucleosides, and allosterically inhibited by phosphoenolpyruvate. Functionally, catalyzes the phosphorylation of D-fructose 6-phosphate to fructose 1,6-bisphosphate by ATP, the first committing step of glycolysis. This chain is ATP-dependent 6-phosphofructokinase, found in Aquifex aeolicus (strain VF5).